The sequence spans 1928 residues: Myosin-1 (1928 aa).

In terms of domain architecture, Myosin N-terminal SH3-like spans 8-71 (SSNMIVWIPD…RISDVFPVNP (64 aa)). Residues 75-791 (DKVENMSELT…VLADLEKQKD (717 aa)) form the Myosin motor domain. 180-187 (GESGAGKT) provides a ligand contact to ATP. The segment at 460-529 (IGLLDIAGFE…LQLTIDLIES (70 aa)) is actin-binding. Positions 629 to 641 (SSSAGVEANISNQ) are enriched in polar residues. Positions 629 to 657 (SSSAGVEANISNQEVKKSARTSTFKTTSS) are disordered. The IQ domain occupies 794–823 (LNNIMIKLTATIRGYTVRKEITYHLQKLKK). A coiled-coil region spans residues 856-1911 (SSNDMTRTKK…FWKSRYESTM (1056 aa)).

The protein belongs to the TRAFAC class myosin-kinesin ATPase superfamily. Myosin family.

Required for cell division. This chain is Myosin-1 (MYO1), found in Saccharomyces cerevisiae (strain ATCC 204508 / S288c) (Baker's yeast).